The primary structure comprises 98 residues: Large ribosomal subunit protein bL28 (98 aa).

Belongs to the bacterial ribosomal protein bL28 family.

This is Large ribosomal subunit protein bL28 from Mesorhizobium japonicum (strain LMG 29417 / CECT 9101 / MAFF 303099) (Mesorhizobium loti (strain MAFF 303099)).